The primary structure comprises 182 residues: Isopentenyl-diphosphate Delta-isomerase (182 aa).

Mn(2+) is bound by residues His25 and His32. Cys67 is an active-site residue. His69 provides a ligand contact to Mn(2+). Mg(2+) is bound at residue Glu87. Mn(2+) contacts are provided by Glu114 and Glu116. The active site involves Glu116.

It belongs to the IPP isomerase type 1 family. As to quaternary structure, homodimer. Requires Mg(2+) as cofactor. Mn(2+) is required as a cofactor.

The protein resides in the cytoplasm. The enzyme catalyses isopentenyl diphosphate = dimethylallyl diphosphate. The protein operates within isoprenoid biosynthesis; dimethylallyl diphosphate biosynthesis; dimethylallyl diphosphate from isopentenyl diphosphate: step 1/1. Functionally, catalyzes the 1,3-allylic rearrangement of the homoallylic substrate isopentenyl (IPP) to its highly electrophilic allylic isomer, dimethylallyl diphosphate (DMAPP). The chain is Isopentenyl-diphosphate Delta-isomerase from Escherichia coli (strain K12 / MC4100 / BW2952).